A 107-amino-acid polypeptide reads, in one-letter code: Quaternary ammonium compound-resistance protein QacH (107 aa).

4 helical membrane-spanning segments follow: residues 1–21, 26–46, 57–77, and 84–104; these read MPYL…AFLK, FSKL…FYFL, ITYA…SVLI, and LISI…NTFG.

Belongs to the drug/metabolite transporter (DMT) superfamily. Small multidrug resistance (SMR) (TC 2.A.7.1) family.

The protein localises to the cell membrane. In terms of biological role, multidrug exporter. Is implicated for the resistance to bacteriocidal quaternary ammonium compounds. The polypeptide is Quaternary ammonium compound-resistance protein QacH (qacH) (Staphylococcus saprophyticus).